A 179-amino-acid chain; its full sequence is Large ribosomal subunit protein uL6 (179 aa).

Residues 154–169 (EPYKGKGVKYEHEQIR) show a composition bias toward basic and acidic residues. Residues 154-179 (EPYKGKGVKYEHEQIRRKAGKSGGKK) are disordered. The segment covering 170 to 179 (RKAGKSGGKK) has biased composition (basic residues).

Belongs to the universal ribosomal protein uL6 family. Part of the 50S ribosomal subunit.

This protein binds to the 23S rRNA, and is important in its secondary structure. It is located near the subunit interface in the base of the L7/L12 stalk, and near the tRNA binding site of the peptidyltransferase center. The sequence is that of Large ribosomal subunit protein uL6 from Oleidesulfovibrio alaskensis (strain ATCC BAA-1058 / DSM 17464 / G20) (Desulfovibrio alaskensis).